The chain runs to 373 residues: Alanine racemase (373 aa).

Lysine 40 functions as the Proton acceptor; specific for D-alanine in the catalytic mechanism. Position 40 is an N6-(pyridoxal phosphate)lysine (lysine 40). Residue arginine 140 coordinates substrate. The active-site Proton acceptor; specific for L-alanine is tyrosine 268. Residue methionine 315 participates in substrate binding.

Belongs to the alanine racemase family. It depends on pyridoxal 5'-phosphate as a cofactor.

The catalysed reaction is L-alanine = D-alanine. Its pathway is amino-acid biosynthesis; D-alanine biosynthesis; D-alanine from L-alanine: step 1/1. Catalyzes the interconversion of L-alanine and D-alanine. May also act on other amino acids. The sequence is that of Alanine racemase (alr) from Levilactobacillus brevis (strain ATCC 367 / BCRC 12310 / CIP 105137 / JCM 1170 / LMG 11437 / NCIMB 947 / NCTC 947) (Lactobacillus brevis).